The following is a 434-amino-acid chain: Enolase (434 aa).

A phosphoenolpyruvate-binding site is contributed by A41. Q165 lines the (2R)-2-phosphoglycerate pocket. E207 functions as the Proton donor in the catalytic mechanism. D244, E291, and D318 together coordinate Mg(2+). Residues K343, R372, S373, and K394 each contribute to the phosphoenolpyruvate site. Residues K343, R372, S373, and K394 each coordinate (2R)-2-phosphoglycerate. K343 functions as the Proton acceptor in the catalytic mechanism.

The protein belongs to the enolase family. As to quaternary structure, homodimer and homooctamer; the homodimer is inactive. Mg(2+) serves as cofactor.

The protein resides in the cytoplasm. Its subcellular location is the secreted. The protein localises to the cell surface. It carries out the reaction (2R)-2-phosphoglycerate = phosphoenolpyruvate + H2O. It participates in carbohydrate degradation; glycolysis; pyruvate from D-glyceraldehyde 3-phosphate: step 4/5. Functionally, catalyzes the reversible conversion of 2-phosphoglycerate (2-PG) into phosphoenolpyruvate (PEP). It is essential for the degradation of carbohydrates via glycolysis. In terms of biological role, 'Moonlights' as a laminin receptor. Binds laminin when expressed on the bacterial cell surface; this probably induces destruction of the extracellular matrix, favoring invasion and dissemination. This chain is Enolase, found in Staphylococcus aureus.